The primary structure comprises 145 residues: Arginine repressor (145 aa).

It belongs to the ArgR family.

Its subcellular location is the cytoplasm. Its pathway is amino-acid biosynthesis; L-arginine biosynthesis [regulation]. In terms of biological role, regulates arginine biosynthesis genes. This chain is Arginine repressor, found in Streptococcus pyogenes serotype M6 (strain ATCC BAA-946 / MGAS10394).